The primary structure comprises 310 residues: Calbindin-32 (310 aa).

6 EF-hand domains span residues 35–70 (LSAN…FVSS), 84–120 (TMLE…EENF), 131–166 (ESSV…LLKE), 177–212 (KLIE…KENF), 224–259 (LTKE…LLEL), and 283–304 (TDKH…LAKI). The Ca(2+) site is built by D48, D50, N52, Y54, E59, D98, N100, D102, K104, E109, D144, D146, S148, Y150, E155, D190, N192, D194, R196, E201, D237, D239, S241, T243, and E248.

The protein belongs to the calbindin family. In terms of tissue distribution, expressed in a large number of neuron of the brain and the thoracic ganglion as well as in two small muscles of the thorax.

The sequence is that of Calbindin-32 (Cbp53E) from Drosophila melanogaster (Fruit fly).